Here is a 315-residue protein sequence, read N- to C-terminus: GPN-loop GTPase 2 homolog (315 aa).

GTP is bound at residue 12–17; it reads GSGKTV. The Gly-Pro-Asn (GPN)-loop; involved in dimer interface motif lies at 69–71; that stretch reads GPN. 171–174 is a binding site for GTP; sequence SKMD.

This sequence belongs to the GPN-loop GTPase family. Heterodimers with gpn1 or gpn3. Binds to RNA polymerase II (RNAPII).

In terms of biological role, small GTPase required for proper localization of RNA polymerase II and III (RNAPII and RNAPIII). May act at an RNAP assembly step prior to nuclear import. The chain is GPN-loop GTPase 2 homolog (gpn2) from Dictyostelium discoideum (Social amoeba).